The primary structure comprises 172 residues: Crossover junction endodeoxyribonuclease RuvC (172 aa).

Catalysis depends on residues Asp-8, Glu-67, and Asp-139. Mg(2+) is bound by residues Asp-8, Glu-67, and Asp-139.

The protein belongs to the RuvC family. As to quaternary structure, homodimer which binds Holliday junction (HJ) DNA. The HJ becomes 2-fold symmetrical on binding to RuvC with unstacked arms; it has a different conformation from HJ DNA in complex with RuvA. In the full resolvosome a probable DNA-RuvA(4)-RuvB(12)-RuvC(2) complex forms which resolves the HJ. Mg(2+) serves as cofactor.

The protein resides in the cytoplasm. The enzyme catalyses Endonucleolytic cleavage at a junction such as a reciprocal single-stranded crossover between two homologous DNA duplexes (Holliday junction).. In terms of biological role, the RuvA-RuvB-RuvC complex processes Holliday junction (HJ) DNA during genetic recombination and DNA repair. Endonuclease that resolves HJ intermediates. Cleaves cruciform DNA by making single-stranded nicks across the HJ at symmetrical positions within the homologous arms, yielding a 5'-phosphate and a 3'-hydroxyl group; requires a central core of homology in the junction. The consensus cleavage sequence is 5'-(A/T)TT(C/G)-3'. Cleavage occurs on the 3'-side of the TT dinucleotide at the point of strand exchange. HJ branch migration catalyzed by RuvA-RuvB allows RuvC to scan DNA until it finds its consensus sequence, where it cleaves and resolves the cruciform DNA. This chain is Crossover junction endodeoxyribonuclease RuvC, found in Hahella chejuensis (strain KCTC 2396).